The following is a 457-amino-acid chain: MMDSQQHGEQLKRGLKNRHIQLIALGGAIGTGLFLGSASVIQSAGPGIILGYAIAGFIAFLIMRQLGEMVVEEPVAGSFSHFAYKYWGGFAGFASGWNYWVLYVLVAMAELTAVGKYIQFWYPEIPTWASAAAFFVIINAINLTNVKVFGEMEFWFAIIKVIAVIAMILFGAWLLFSDTAGPQATVRNLWEQGGFLPHGWTGLVMMMAIIMFSFGGLELVGITAAEADNPEQSIPKATNQVIYRILIFYIGSLAVLLSLLPWTRVTADTSPFVLIFHELGDTFVANALNIVVLTAALSVYNSCVYCNSRMLFGLAQQGNAPKALLNVDKRGVPVSSILVSAVVTALCVLLNYLAPESAFGLLMALVVSALVINWAMISLAHMMFRRAKQQQGVKTRFPALFYPFGNVLCLLFMAAVLIIMLMTPGMAISVWLIPVWLLILGVGYLCKEKTAKTVKAH.

Topologically, residues 1–20 are cytoplasmic; that stretch reads MMDSQQHGEQLKRGLKNRHI. The helical transmembrane segment at 21–41 threads the bilayer; it reads QLIALGGAIGTGLFLGSASVI. Residue Q42 is a topological domain, periplasmic. Residues 43-63 traverse the membrane as a helical segment; that stretch reads SAGPGIILGYAIAGFIAFLIM. The Cytoplasmic segment spans residues 64 to 86; that stretch reads RQLGEMVVEEPVAGSFSHFAYKY. Residues 87-107 traverse the membrane as a helical segment; the sequence is WGGFAGFASGWNYWVLYVLVA. The Periplasmic portion of the chain corresponds to 108-117; the sequence is MAELTAVGKY. Residues 118–138 form a helical membrane-spanning segment; it reads IQFWYPEIPTWASAAAFFVII. At 139-155 the chain is on the cytoplasmic side; that stretch reads NAINLTNVKVFGEMEFW. Residues 156-176 form a helical membrane-spanning segment; that stretch reads FAIIKVIAVIAMILFGAWLLF. Topologically, residues 177 to 201 are periplasmic; sequence SDTAGPQATVRNLWEQGGFLPHGWT. Residues 202-222 form a helical membrane-spanning segment; that stretch reads GLVMMMAIIMFSFGGLELVGI. At 223-240 the chain is on the cytoplasmic side; it reads TAAEADNPEQSIPKATNQ. The helical transmembrane segment at 241-261 threads the bilayer; that stretch reads VIYRILIFYIGSLAVLLSLLP. At 262–271 the chain is on the periplasmic side; that stretch reads WTRVTADTSP. Residues 272-292 form a helical membrane-spanning segment; that stretch reads FVLIFHELGDTFVANALNIVV. Residues 293 to 333 are Cytoplasmic-facing; sequence LTAALSVYNSCVYCNSRMLFGLAQQGNAPKALLNVDKRGVP. A helical transmembrane segment spans residues 334–354; it reads VSSILVSAVVTALCVLLNYLA. The Periplasmic segment spans residues 355–358; that stretch reads PESA. A helical membrane pass occupies residues 359–379; it reads FGLLMALVVSALVINWAMISL. The Cytoplasmic segment spans residues 380–400; that stretch reads AHMMFRRAKQQQGVKTRFPAL. The helical transmembrane segment at 401-421 threads the bilayer; that stretch reads FYPFGNVLCLLFMAAVLIIML. Topologically, residues 422-425 are periplasmic; that stretch reads MTPG. The helical transmembrane segment at 426 to 446 threads the bilayer; the sequence is MAISVWLIPVWLLILGVGYLC. At 447-457 the chain is on the cytoplasmic side; it reads KEKTAKTVKAH.

Belongs to the amino acid-polyamine-organocation (APC) superfamily. Amino acid transporter (AAT) (TC 2.A.3.1) family.

The protein localises to the cell inner membrane. The enzyme catalyses L-phenylalanine(in) + H(+)(in) = L-phenylalanine(out) + H(+)(out). The catalysed reaction is L-tryptophan(in) + H(+)(in) = L-tryptophan(out) + H(+)(out). It catalyses the reaction L-tyrosine(in) + H(+)(in) = L-tyrosine(out) + H(+)(out). In terms of biological role, permease that is involved in the active transport across the cytoplasmic membrane of all three aromatic amino acids, phenylalanine, tyrosine and tryptophan. This chain is Aromatic amino acid transport protein AroP (aroP), found in Salmonella typhi.